The primary structure comprises 443 residues: MITRFAPSPTGYLHVGNVRTALVCWLYARKQNGKFLLRFDDTDTQRSKDEYIREIENDLVWLNINWDSSFRQSSRFDRYEDVFNYLLKEGLIYPCYESKEELEFKRKMKLKLGLPPIYDRSALNLTQAEKDKYSERAPYFRFKIDQNQLISWNDEVRGKVSFNSENISDPIIRRVDGTYTYMLPSIIDDMDFNVTHIIRGEDHISNTAVQIQMLHALKASIPIFSHLSLLYSDDNKISKRVGGSSVKDMQSYGLEPMAINSYFAKIGTSNPVSVHTRMCGLIDSFDITTFSQAPTKFNIDDVLKLNPKVLCSMSFDDVRNRLQSFNITSPSFWNFVCGNIDKFSDIEGWAKICSGDMIPVIGQDDKDFIMLALNMLPQGEVRDNTWNLWISNIKQHTDRRAKNLFTPLRLALTGLSTGPELAKLLPLIGRVEIVRRLSYSEVQ.

A 'HIGH' region motif is present at residues 7 to 17 (PSPTGYLHVGN). Positions 236–240 (KISKR) match the 'KMSKS' region motif. Lysine 239 contributes to the ATP binding site.

This sequence belongs to the class-I aminoacyl-tRNA synthetase family. Glutamate--tRNA ligase type 1 subfamily. Monomer.

The protein resides in the cytoplasm. It carries out the reaction tRNA(Glu) + L-glutamate + ATP = L-glutamyl-tRNA(Glu) + AMP + diphosphate. Catalyzes the attachment of glutamate to tRNA(Glu) in a two-step reaction: glutamate is first activated by ATP to form Glu-AMP and then transferred to the acceptor end of tRNA(Glu). The sequence is that of Glutamate--tRNA ligase 1 from Ehrlichia chaffeensis (strain ATCC CRL-10679 / Arkansas).